The chain runs to 605 residues: Aspartate--tRNA(Asp/Asn) ligase (605 aa).

Residue glutamate 183 participates in L-aspartate binding. Positions 207 to 210 are aspartate; that stretch reads QLFK. L-aspartate is bound at residue arginine 229. Residues 229–231 and glutamine 238 each bind ATP; that span reads RDE. Histidine 457 contacts L-aspartate. Glutamate 497 serves as a coordination point for ATP. Arginine 504 is an L-aspartate binding site. Residue 549-552 participates in ATP binding; the sequence is GLDR.

It belongs to the class-II aminoacyl-tRNA synthetase family. Type 1 subfamily. Homodimer.

The protein resides in the cytoplasm. It catalyses the reaction tRNA(Asx) + L-aspartate + ATP = L-aspartyl-tRNA(Asx) + AMP + diphosphate. Functionally, aspartyl-tRNA synthetase with relaxed tRNA specificity since it is able to aspartylate not only its cognate tRNA(Asp) but also tRNA(Asn). Reaction proceeds in two steps: L-aspartate is first activated by ATP to form Asp-AMP and then transferred to the acceptor end of tRNA(Asp/Asn). The chain is Aspartate--tRNA(Asp/Asn) ligase from Persephonella marina (strain DSM 14350 / EX-H1).